The chain runs to 494 residues: Hepatic triacylglycerol lipase (494 aa).

Residues 1-21 (MGNHLQISVSLVLCIFIQSSA) form the signal peptide. N-linked (GlcNAc...) asparagine glycosylation is present at asparagine 79. Serine 169 functions as the Nucleophile in the catalytic mechanism. Aspartate 195 acts as the Charge relay system in catalysis. Residues 255 to 278 (CHFLELYKHIAEHGLNAITQTINC) form an essential for determining substrate specificity region. The active-site Charge relay system is histidine 280. The PLAT domain occupies 353–487 (YHYQFKIQFI…HPTQEKVFVK (135 aa)). An N-linked (GlcNAc...) asparagine glycan is attached at asparagine 398.

The protein belongs to the AB hydrolase superfamily. Lipase family. Homodimer.

Its subcellular location is the secreted. The catalysed reaction is a triacylglycerol + H2O = a diacylglycerol + a fatty acid + H(+). It catalyses the reaction a 1-acyl-sn-glycero-3-phosphocholine + H2O = sn-glycerol 3-phosphocholine + a fatty acid + H(+). The enzyme catalyses a 1,2-diacyl-sn-glycero-3-phosphocholine + H2O = a 2-acyl-sn-glycero-3-phosphocholine + a fatty acid + H(+). It carries out the reaction 1,2-di-(9Z-octadecenoyl)-sn-glycerol + H2O = 2-(9Z-octadecenoyl)-glycerol + (9Z)-octadecenoate + H(+). The catalysed reaction is 1,2,3-tri-(9Z-octadecenoyl)-glycerol + H2O = 2,3-di-(9Z)-octadecenoyl-sn-glycerol + (9Z)-octadecenoate + H(+). It catalyses the reaction 1-(9Z-octadecenoyl)-sn-glycero-3-phospho-L-serine + H2O = sn-glycero-3-phospho-L-serine + (9Z)-octadecenoate + H(+). The enzyme catalyses 1-hexadecanoyl-sn-glycero-3-phosphocholine + H2O = sn-glycerol 3-phosphocholine + hexadecanoate + H(+). It carries out the reaction 1,3-di-(9Z-octadecenoyl)-glycerol + H2O = 3-(9Z-octadecenoyl)-sn-glycerol + (9Z)-octadecenoate + H(+). The catalysed reaction is 1,2,3-tri-(9Z-octadecenoyl)-glycerol + H2O = di-(9Z)-octadecenoylglycerol + (9Z)-octadecenoate + H(+). It catalyses the reaction 1,2-di-(9Z-octadecenoyl)-sn-glycero-3-phosphocholine + H2O = (9Z-octadecenoyl)-sn-glycero-3-phosphocholine + (9Z)-octadecenoate + H(+). The enzyme catalyses 1,2,3-tributanoylglycerol + H2O = dibutanoylglycerol + butanoate + H(+). It carries out the reaction 1,2-dihexadecanoyl-sn-glycero-3-phosphocholine + H2O = hexadecanoyl-sn-glycero-3-phosphocholine + hexadecanoate + H(+). Phospholipase A1 and lysophospholipase activities are inhibited by annexin II. Catalyzes the hydrolysis of triglycerides and phospholipids present in circulating plasma lipoproteins, including chylomicrons, intermediate density lipoproteins (IDL), low density lipoproteins (LDL) of large size and high density lipoproteins (HDL), releasing free fatty acids (FFA) and smaller lipoprotein particles. Also exhibits lysophospholipase activity. Can hydrolyze both neutral lipid and phospholipid substrates but shows a greater binding affinity for neutral lipid substrates than phospholipid substrates. In native LDL, preferentially hydrolyzes the phosphatidylcholine species containing polyunsaturated fatty acids at sn-2 position. This is Hepatic triacylglycerol lipase (Lipc) from Rattus norvegicus (Rat).